Here is a 74-residue protein sequence, read N- to C-terminus: Small ribosomal subunit protein uS15 (74 aa).

Belongs to the universal ribosomal protein uS15 family. Part of the 30S ribosomal subunit. Forms a bridge to the 50S subunit in the 70S ribosome, contacting the 23S rRNA.

One of the primary rRNA binding proteins, it binds directly to 16S rRNA where it helps nucleate assembly of the platform of the 30S subunit by binding and bridging several RNA helices of the 16S rRNA. Functionally, forms an intersubunit bridge (bridge B4) with the 23S rRNA of the 50S subunit in the ribosome. The protein is Small ribosomal subunit protein uS15 of Aster yellows witches'-broom phytoplasma (strain AYWB).